The primary structure comprises 548 residues: MSHILRAAVLAAMLLPLPSMADQAGKSPNAVRYHGGDEIILQGFHWNVVREAPNDWYNILRQQAATIAADGFSAIWMPVPWRDFSSWSDGSKSGGGEGYFWHDFNKNGRYGSDAQLRQAASALGGAGVKVLYDVVPNHMNRGYPDKEINLPAGQGFWRNDCADPGNYPNDCDDGDRFIGGDADLNTGHPQVYGMFRDEFTNLRSQYGAGGFRFDFVRGYAPERVNSWMTDSADNSFCVGELWKGPSEYPNWDWRNTASWQQIIKDWSDRAKCPVFDFALKERMQNGSIADWKHGLNGNPDPRWREVAVTFVDNHDTGYSPGQNGGQHHWALQDGLIRQAYAYILTSPGTPVVYWSHMYDWGYGDFIRQLIQVRRAAGVRADSAISFHSGYSGLVATVSGSQQTLVVALNSDLGNPGQVASGSFSEAVNASNGQVRVWRSGTGSGGGEPGALVSVSFRCDNGATQMGDSVYAVGNVSQLGNWSPAAALRLTDTSGYPTWKGSIALPAGQNEEWKCLIRNEANATQVRQWQGGANNSLTPSEGATTVGRL.

Residues 1-21 form the signal peptide; that stretch reads MSHILRAAVLAAMLLPLPSMA. 5 residues coordinate Ca(2+): Asp-22, Gln-23, His-34, Asp-37, and Glu-38. Residue 99 to 100 participates in substrate binding; the sequence is YF. Residue Asn-137 participates in Ca(2+) binding. Substrate is bound at residue His-138. A disulfide bond links Cys-161 and Cys-171. Ca(2+) contacts are provided by Asp-172 and Asp-175. 177 to 181 lines the substrate pocket; it reads FIGGD. Residue Asp-183 coordinates Ca(2+). Arg-212 contributes to the substrate binding site. The Nucleophile role is filled by Asp-214. 217–218 serves as a coordination point for substrate; it reads RG. Gly-218 is a binding site for Ca(2+). A disulfide bond links Cys-237 and Cys-272. Glu-240 (proton donor) is an active-site residue. Positions 314 and 326 each coordinate substrate. Residues 446–548 form the CBM20 domain; that stretch reads GEPGALVSVS…SEGATTVGRL (103 aa). A compositionally biased stretch (polar residues) spans 529 to 542; it reads QGGANNSLTPSEGA. A disordered region spans residues 529–548; that stretch reads QGGANNSLTPSEGATTVGRL.

The protein belongs to the glycosyl hydrolase 13 family. In terms of assembly, monomer. The cofactor is Ca(2+).

The protein localises to the secreted. It carries out the reaction Hydrolysis of (1-&gt;4)-alpha-D-glucosidic linkages in amylaceous polysaccharides, to remove successive maltotetraose residues from the non-reducing chain ends.. It participates in glycan degradation; starch degradation. The chain is Glucan 1,4-alpha-maltotetraohydrolase (amyP) from Stutzerimonas stutzeri (Pseudomonas stutzeri).